A 698-amino-acid chain; its full sequence is Trafficking protein particle complex III-specific subunit 85 (698 aa).

2 disordered regions span residues V82–R125 and V678–G698. The segment covering V678 to L689 has biased composition (basic and acidic residues).

Belongs to the TRS85 family. Part of the multisubunit TRAPP (transport protein particle) III complex composed of BET3, BET5, TRS20, TRS23, TRS31, TRS33 and TRS85.

The protein resides in the preautophagosomal structure. Its function is as follows. Specific subunit of the TRAPP III complex that acts as an autophagy-specific guanine nucleotide exchange factor (GEF) for YPT1. TRS85 directs the TRAPP III complex to the phagophore assembly site (PAS) that is involved in autophagosome formation. Required for membrane expansion during autophagy and the CVT pathway. Required for sporulation. Has a role late in meiosis following DNA replication. The protein is Trafficking protein particle complex III-specific subunit 85 (TRS85) of Saccharomyces cerevisiae (strain ATCC 204508 / S288c) (Baker's yeast).